Consider the following 593-residue polypeptide: Acetyl-coenzyme A transferase nodX (593 aa).

A disordered region spans residues 572-593 (DEDEQGSGFRSGSGLGSGSIAD). Over residues 580 to 593 (FRSGSGLGSGSIAD) the composition is skewed to gly residues.

It belongs to the CoA-transferase III family.

Its pathway is secondary metabolite biosynthesis. Functionally, acetyl-coenzyme A transferase; part of the gene cluster that mediates the biosynthesis of the indole diterpenes nodulisporic acids (NA). Nodulisporic acid A (NAA) and its chemically modified derivatives are of particular significance because of their highly potent insecticidal activity against blood-feeding arthropods and lack of observable adverse effects on mammals, in particular the tremogenicity associated with the paspaline-derived IDTs is not observed. The geranylgeranyl diphosphate (GGPP) synthase ggs1, localized outside of the cluster, is proposed to catalyze the first step in nodulisporic acid biosynthesis via conversion of farnesyl pyrophosphate and isopentyl pyrophosphate into geranylgeranyl pyrophosphate (GGPP). Condensation of indole-3-glycerol phosphate with GGPP by the prenyl transferase nodC then forms 3-geranylgeranylindole (3-GGI). Epoxidation by the FAD-dependent monooxygenase nodM leads to a single-epoxidized-GGI that is substrate of the terpene cyclase nodB for cyclization to yield emindole SB. The terminal methyl carbon, C28, of emindole SB is then oxidized by the cytochrome P450 monooxygenase nodW to produce nodulisporic acid F (NAF), the pentacyclic core of NAA. NAF is converted to nodulisporic acid E (NAE) via prenylation. This step is probably performed by one of the indole diterpene prenyltransferases nodD1 or nodD2. Several oxidation steps performed by the FAD-linked oxidoreductase nodO and one of the cytochrome P450 monooxygenase nodR, nodX or nodZ further convert NAE to nodulisporic acid D (NAD). NAD is substrate of cytochrome P450 monooxygenase nodJ to produce the precursor of nodulisporic acid C (NAC), converted to NAC by one of the indole diterpene prenyltransferases nodD1 or nodD2. The FAD-dependent monooxygenase nodY2 then oxidizes NAC to nodulisporic acid B (NAB). Finally NAB is converted to NAA by one of the cytochrome P450 monooxygenases nodR, nodX or nodZ. This chain is Acetyl-coenzyme A transferase nodX, found in Hypoxylon pulicicidum.